A 1411-amino-acid chain; its full sequence is MFRRILQRTPGRVGSQGSDLDSSATPINTVDVNNESSSEGFICPQCMKSLGSADELFKHYQAVHDAGNDSGHGGEAGLALTRDDITLLRQEVQDLQASLKEEKWYSEELKKELEKYQGLQQQEAKSDGLVTDSSAELQALEQQLEEAQTENFNIKQMKDLFEQKAAQLATEIADIKSKYDEEKSLRAAAEQKVTHLTEDLNKQTTVIQDLKTELLQRPGIEDVAVLKKELVQVQTLMDNMTLERERESEKLKDECKKLQSEHAHLEATINQLRSELAKGPQEVAVYVQEIQKLKGSINELTQKNQNLTEKLQKKDLDYTHLEEKHNEESASRKTLQASLHQRDLDCQQLQARLTASESSLQRAQGELSEKAEAAQKLREELREVESTRQHLKVEVKQLQQQREEKEQHGLQLQGEVSQLHCKLLETERQLGEAHGRLKEQRQLSSEKLMEKEQQVADLQLKLSRLEEQLKEKVTNSTELQHQLEKSKQQHQEQQALQQSATAKLREAQNDLEQVLRQIGDKDQKIQNLEALLQKGKESVSLLEKEREDLYAKIQAGEGETAVLNQLQEKNHALQQQLTQLTEKLKNQSESHKQAEENLHDQVQEQKAHLRAAQDRVLSLETSVSELSSQLNESKEKVSQLDIQIKAKTELLLSAEAAKAAQRADLQNHLDTAQHALQDKQQELNKVSVQLDQLTAKFQEKQEHCIQLESHLKDHKEKHLSLEQKVEDLEGHIKKLEADALEVKASKEQALQSLQQQRQLSTDLELRNAELSRELQEQEEVVSCTKLDLQNKSEILENIKQTLTKKEEENVVLKQEFEKLSQDSKTQHKELGDRMQAAVTELTAVKAQKDALLAELSTTKEKLSKVSDSLKNSKSEFEKENQKGKAAVLDLEKACKELKHQLQVQAESALKEQEDLKKSLEKEKETSQQLKIELNSVKGEVSQAQNTLKQKEKDEQQLQGTINQLKQSAEQKKKQIEALQGEVKNAVSQKTVLENKLQQQSSQAAQELAAEKGKLSALQSNYEKCQADLKQLQSDLYGKESELLATRQDLKSVEEKLTLAQEDLISNRNQIGNQNKSIQELQAAKASLEQDSAKKEALLKEQSKALEDAQREKSVKEKELVAEKSKLAEMEEIKCRQEKEITKLNEELKSHKQESIKEITNLKDAKQLLIQQKLELQGRVDSLKAALEQEKESQQLMREQVKKEEEKRKEEFSEKEAKLHSEIKEKEAGMKKHEENEAKLTMQVTTLNENLGTVKKEWQSSQRRVSELEKQTDDLRGEIAVLEATVQNNQDERRALLERCLKGEGEIEKLQTKALELQRKLDNTTAAVQELGRENQSLQIKHTQALNRKWAEDNEVQNCMSCGKCFSVTVRRHHCRQCGNIFCAECSTKNALTPSSKKPVRVCDACFNDLQG.

The segment at 1-27 (MFRRILQRTPGRVGSQGSDLDSSATPI) is disordered. Residues 15 to 27 (SQGSDLDSSATPI) are compositionally biased toward polar residues. A C2H2-type zinc finger spans residues 41–64 (FICPQCMKSLGSADELFKHYQAVH). Phosphoserine occurs at positions 52 and 70. A coiled-coil region spans residues 78–1348 (LALTRDDITL…IKHTQALNRK (1271 aa)). Disordered stretches follow at residues 476–501 (STEL…QSAT) and 1189–1217 (EKES…KEAK). Residues 481 to 490 (HQLEKSKQQH) are compositionally biased toward basic and acidic residues. Low complexity predominate over residues 491-500 (QEQQALQQSA). Residues 1352-1410 (DNEVQNCMSCGKCFSVTVRRHHCRQCGNIFCAECSTKNALTPSSKKPVRVCDACFNDLQ) form an FYVE-type zinc finger. The Zn(2+) site is built by C1358, C1361, C1374, C1377, C1382, C1385, C1402, and C1405.

As to quaternary structure, homodimer. Binds STX6. Binds RAB5A, RAB5B, RAB5C and RAB22A that have been activated by GTP-binding. Interacts with ERBB2. Interacts with RAB31. Interacts with SAMD9 and SAMD9L. May interact with PLEKHF2.

It is found in the cytoplasm. The protein resides in the early endosome membrane. In terms of biological role, binds phospholipid vesicles containing phosphatidylinositol 3-phosphate and participates in endosomal trafficking. This Mus musculus (Mouse) protein is Early endosome antigen 1 (Eea1).